A 76-amino-acid polypeptide reads, in one-letter code: Spermatid nuclear transition protein 3 (76 aa).

The span at 1 to 11 (AKVTEKSWQPQ) shows a compositional bias: polar residues. Disordered stretches follow at residues 1 to 34 (AKVT…GKVR) and 56 to 76 (VITT…ETIP). Basic residues predominate over residues 16–34 (KRWKKRKTPSQPRSRGKVR).

Its subcellular location is the nucleus. It is found in the chromosome. In terms of biological role, involved in nuclear basic protein transition: histones are replaced by spermatid specific proteins which are themselves replaced by protamines in late spermatids. This Sus scrofa (Pig) protein is Spermatid nuclear transition protein 3 (TNP3).